Consider the following 179-residue polypeptide: DNA utilization protein HofN (179 aa).

Residues 19–39 (LRFWLLMFVAPLLLAVGITLI) form a helical membrane-spanning segment.

Its subcellular location is the cell inner membrane. Functionally, required for the use of extracellular DNA as a nutrient. In Escherichia coli (strain K12), this protein is DNA utilization protein HofN (hofN).